Consider the following 848-residue polypeptide: Coiled-coil domain-containing protein 110 (848 aa).

The segment at 41-62 is disordered; that stretch reads SEGVKESGGNEPEYGCASEPEN. Residues 442–794 adopt a coiled-coil conformation; it reads LQNYLKESLQ…LSDKVSSQNN (353 aa). Serine 620 is subject to Phosphoserine.

The protein localises to the nucleus. This Mus musculus (Mouse) protein is Coiled-coil domain-containing protein 110 (Ccdc110).